A 230-amino-acid polypeptide reads, in one-letter code: Protein RESPONSE TO ABA AND SALT 1 (230 aa).

The DOG1 domain maps to 7–230 (SQSFTIFVDG…RLRDRDQERA (224 aa)).

In terms of biological role, negative regulator of salt (NaCl) tolerance probably by enhancing abscisic acid (ABA) sensitivity. In Arabidopsis thaliana (Mouse-ear cress), this protein is Protein RESPONSE TO ABA AND SALT 1.